The following is a 158-amino-acid chain: Cyclic pyranopterin monophosphate synthase (158 aa).

Residues 76–78 and 114–115 each bind substrate; these read LCH and ME. The active site involves Asp-129.

It belongs to the MoaC family. As to quaternary structure, homohexamer; trimer of dimers.

The catalysed reaction is (8S)-3',8-cyclo-7,8-dihydroguanosine 5'-triphosphate = cyclic pyranopterin phosphate + diphosphate. The protein operates within cofactor biosynthesis; molybdopterin biosynthesis. Its function is as follows. Catalyzes the conversion of (8S)-3',8-cyclo-7,8-dihydroguanosine 5'-triphosphate to cyclic pyranopterin monophosphate (cPMP). The polypeptide is Cyclic pyranopterin monophosphate synthase (Shewanella sediminis (strain HAW-EB3)).